Here is a 586-residue protein sequence, read N- to C-terminus: Cryptochrome-1 (586 aa).

The Photolyase/cryptochrome alpha/beta domain maps to 3–132 (VNAVHWFRKG…EVIVRISHTL (130 aa)). Lys-11 participates in a covalent cross-link: Glycyl lysine isopeptide (Lys-Gly) (interchain with G-Cter in ubiquitin). Positions 50 to 54 (NRWRF) match the LIR 1 motif. Ser-71 bears the Phosphoserine; by AMPK mark. The LIR 2 signature appears at 82–87 (DVFPRL). Lys-107 participates in a covalent cross-link: Glycyl lysine isopeptide (Lys-Gly) (interchain with G-Cter in ubiquitin). An LIR 3 motif is present at residues 151–156 (KRFQTL). A Glycyl lysine isopeptide (Lys-Gly) (interchain with G-Cter in ubiquitin) cross-link involves residue Lys-159. The residue at position 247 (Ser-247) is a Phosphoserine; by MAPK. Position 252 (Ser-252) interacts with FAD. Short sequence motifs (LIR) lie at residues 255-260 (LRFGCL) and 271-276 (DLYKKV). Ser-280 carries the post-translational modification Phosphoserine; by AMPK. Positions 285–290 (SLYGQL) match the LIR 6 motif. Gln-289 contributes to the FAD binding site. Lys-329 is covalently cross-linked (Glycyl lysine isopeptide (Lys-Gly) (interchain with G-Cter in ubiquitin)). The LIR 7 motif lies at 335 to 339 (TGFPW). His-355 is an FAD binding site. Residues 371–470 (WISWEEGMKV…LIGINYPKPM (100 aa)) form a required for inhibition of CLOCK-BMAL1-mediated transcription region. Residues 379–384 (KVFEEL) carry the LIR 8 motif. An FAD-binding site is contributed by 387-389 (DAD). 3 consecutive short sequence motifs (LIR) follow at residues 395-400 (GSWMWL), 411-416 (HCYCPV), and 430-435 (RRYLPV). The interval 471–493 (VNHAEASRLNIERMKQIYQQLSR) is interaction with TIMELESS. Lys-485 participates in a covalent cross-link: Glycyl lysine isopeptide (Lys-Gly) (interchain with G-Cter in ubiquitin). 2 short sequence motifs (LIR) span residues 486-491 (QIYQQL) and 492-497 (SRYRGL). Over residues 545 to 559 (QQTHLLKQGRSSMGT) the composition is skewed to polar residues. The tract at residues 545–586 (QQTHLLKQGRSSMGTGLSGGKRPSQEEDTQSIGPKVQRQSTN) is disordered. Lys-565 is covalently cross-linked (Glycyl lysine isopeptide (Lys-Gly) (interchain with G-Cter in ubiquitin)). Ser-568 carries the post-translational modification Phosphoserine.

The protein belongs to the DNA photolyase class-1 family. In terms of assembly, component of the circadian core oscillator, which includes the CRY proteins, CLOCK or NPAS2, BMAL1 or BMAL2, CSNK1D and/or CSNK1E, TIMELESS, and the PER proteins. Interacts directly with TIMELESS. Interacts directly with PER1, PER2 and PER3; interaction with PER2 inhibits its ubiquitination and vice versa. Interacts with FBXL21. Interacts with FBXL3. Interacts with CLOCK-BMAL1 independently of PER2 and DNA. Interacts with HDAC1, HDAC2 and SIN3B. Interacts with nuclear receptors AR, NR1D1, NR3C1/GR, RORA and RORC; the interaction with at least NR3C1/GR is ligand dependent. Interacts with PRKDC. Interacts with the G protein subunit alpha GNAS; the interaction may block GPCR-mediated regulation of cAMP concentrations. Interacts with PRMT5. Interacts with EZH2. Interacts with MYBBP1A, DOCK7, HNRNPU, RPL7A, RPL8 and RPS3. Interacts with PPP5C (via TPR repeats). Interacts with MAP1LC3B. Interacts with CLOCK. Interacts with BMAL1. Interacts weakly with HDAC3; this interaction is enhanced in the presence of FBXL3. Interacts with TRIM28, KCTD5 and DDB1. Interacts with FOXO1. Interacts with DTL and DDB1-CUL4A complex. Interacts with HNF4A. Interacts with PSMD2 in a KDM8-dependent manner. Interacts with KDM8 in a FBXL3-dependent manner. Interacts with PPARG in a ligand-dependent manner. Interacts with PPARD (via domain NR LBD) and NR1I2 (via domain NR LBD) in a ligand-dependent manner. Interacts with PPARA, NR1I3 and VDR. Requires FAD as cofactor. It depends on (6R)-5,10-methylene-5,6,7,8-tetrahydrofolate as a cofactor. Post-translationally, phosphorylation on Ser-247 by MAPK is important for the inhibition of CLOCK-BMAL1-mediated transcriptional activity. Phosphorylation by CSNK1E requires interaction with PER1 or PER2. Phosphorylation at Ser-71 and Ser-280 by AMPK decreases protein stability. Phosphorylation at Ser-568 exhibits a robust circadian rhythm with a peak at CT8, increases protein stability, prevents SCF(FBXL3)-mediated degradation and is antagonized by interaction with PRKDC. In terms of processing, ubiquitinated by the SCF(FBXL3) and SCF(FBXL21) complexes, regulating the balance between degradation and stabilization. The SCF(FBXL3) complex is mainly nuclear and mediates ubiquitination and subsequent degradation of CRY1. In contrast, cytoplasmic SCF(FBXL21) complex-mediated ubiquitination leads to stabilize CRY1 and counteract the activity of the SCF(FBXL3) complex. The SCF(FBXL3) and SCF(FBXL21) complexes probably mediate ubiquitination at different Lys residues. Ubiquitination at Lys-11 and Lys-107 are specifically ubiquitinated by the SCF(FBXL21) complex but not by the SCF(FBXL3) complex. Ubiquitination may be inhibited by PER2. Deubiquitinated by USP7. Undergoes autophagy-mediated degradation in the liver in a time-dependent manner. Autophagic degradation of CRY1 (an inhibitor of gluconeogenesis) occurs during periods of reduced feeding allowing induction of gluconeogenesis and maintenance of blood glucose levels.

It is found in the cytoplasm. It localises to the nucleus. Transcriptional repressor which forms a core component of the circadian clock. The circadian clock, an internal time-keeping system, regulates various physiological processes through the generation of approximately 24 hour circadian rhythms in gene expression, which are translated into rhythms in metabolism and behavior. It is derived from the Latin roots 'circa' (about) and 'diem' (day) and acts as an important regulator of a wide array of physiological functions including metabolism, sleep, body temperature, blood pressure, endocrine, immune, cardiovascular, and renal function. Consists of two major components: the central clock, residing in the suprachiasmatic nucleus (SCN) of the brain, and the peripheral clocks that are present in nearly every tissue and organ system. Both the central and peripheral clocks can be reset by environmental cues, also known as Zeitgebers (German for 'timegivers'). The predominant Zeitgeber for the central clock is light, which is sensed by retina and signals directly to the SCN. The central clock entrains the peripheral clocks through neuronal and hormonal signals, body temperature and feeding-related cues, aligning all clocks with the external light/dark cycle. Circadian rhythms allow an organism to achieve temporal homeostasis with its environment at the molecular level by regulating gene expression to create a peak of protein expression once every 24 hours to control when a particular physiological process is most active with respect to the solar day. Transcription and translation of core clock components (CLOCK, NPAS2, BMAL1, BMAL2, PER1, PER2, PER3, CRY1 and CRY2) plays a critical role in rhythm generation, whereas delays imposed by post-translational modifications (PTMs) are important for determining the period (tau) of the rhythms (tau refers to the period of a rhythm and is the length, in time, of one complete cycle). A diurnal rhythm is synchronized with the day/night cycle, while the ultradian and infradian rhythms have a period shorter and longer than 24 hours, respectively. Disruptions in the circadian rhythms contribute to the pathology of cardiovascular diseases, cancer, metabolic syndromes and aging. A transcription/translation feedback loop (TTFL) forms the core of the molecular circadian clock mechanism. Transcription factors, CLOCK or NPAS2 and BMAL1 or BMAL2, form the positive limb of the feedback loop, act in the form of a heterodimer and activate the transcription of core clock genes and clock-controlled genes (involved in key metabolic processes), harboring E-box elements (5'-CACGTG-3') within their promoters. The core clock genes: PER1/2/3 and CRY1/2 which are transcriptional repressors form the negative limb of the feedback loop and interact with the CLOCK|NPAS2-BMAL1|BMAL2 heterodimer inhibiting its activity and thereby negatively regulating their own expression. This heterodimer also activates nuclear receptors NR1D1/2 and RORA/B/G, which form a second feedback loop and which activate and repress BMAL1 transcription, respectively. CRY1 and CRY2 have redundant functions but also differential and selective contributions at least in defining the pace of the SCN circadian clock and its circadian transcriptional outputs. More potent transcriptional repressor in cerebellum and liver than CRY2, though more effective in lengthening the period of the SCN oscillator. On its side, CRY2 seems to play a critical role in tuning SCN circadian period by opposing the action of CRY1. With CRY2, is dispensable for circadian rhythm generation but necessary for the development of intercellular networks for rhythm synchrony. Capable of translocating circadian clock core proteins such as PER proteins to the nucleus. Interacts with CLOCK-BMAL1 independently of PER proteins and is found at CLOCK-BMAL1-bound sites, suggesting that CRY may act as a molecular gatekeeper to maintainCLOCK-BMAL1 in a poised and repressed state until the proper time for transcriptional activation. Represses the CLOCK-BMAL1 induced transcription of BHLHE40/DEC1, ATF4, MTA1, KLF10 and NAMPT. May repress circadian target genes expression in collaboration with HDAC1 and HDAC2 through histone deacetylation. Mediates the clock-control activation of ATR and modulates ATR-mediated DNA damage checkpoint. In liver, mediates circadian regulation of cAMP signaling and gluconeogenesis by binding to membrane-coupled G proteins and blocking glucagon-mediated increases in intracellular cAMP concentrations and CREB1 phosphorylation. Inhibits hepatic gluconeogenesis by decreasing nuclear FOXO1 levels that down-regulates gluconeogenic gene expression. Besides its role in the maintenance of the circadian clock, is also involved in the regulation of other processes. Represses glucocorticoid receptor NR3C1/GR-induced transcriptional activity by binding to glucocorticoid response elements (GREs). Plays a key role in glucose and lipid metabolism modulation, in part, through the transcriptional regulation of genes involved in these pathways, such as LEP or ACSL4. Represses PPARD and its target genes in the skeletal muscle and limits exercise capacity. Plays an essential role in the generation of circadian rhythms in the retina. Represses the transcriptional activity of NR1I2. This Macaca fascicularis (Crab-eating macaque) protein is Cryptochrome-1 (CRY1).